A 297-amino-acid polypeptide reads, in one-letter code: Glycerol-3-phosphate dehydrogenase [NAD(P)+] (297 aa).

Positions 11, 33, and 79 each coordinate NADPH. Residues K79, G107, and S109 each contribute to the sn-glycerol 3-phosphate site. NADPH is bound at residue A111. Sn-glycerol 3-phosphate-binding residues include K161, D214, S224, R225, and N226. The Proton acceptor role is filled by K161. R225 contacts NADPH. V249 and E251 together coordinate NADPH.

Belongs to the NAD-dependent glycerol-3-phosphate dehydrogenase family.

It localises to the cytoplasm. It carries out the reaction sn-glycerol 3-phosphate + NAD(+) = dihydroxyacetone phosphate + NADH + H(+). It catalyses the reaction sn-glycerol 3-phosphate + NADP(+) = dihydroxyacetone phosphate + NADPH + H(+). The protein operates within membrane lipid metabolism; glycerophospholipid metabolism. In terms of biological role, catalyzes the reduction of the glycolytic intermediate dihydroxyacetone phosphate (DHAP) to sn-glycerol 3-phosphate (G3P), the key precursor for phospholipid synthesis. This is Glycerol-3-phosphate dehydrogenase [NAD(P)+] from Campylobacter jejuni subsp. jejuni serotype O:6 (strain 81116 / NCTC 11828).